The following is a 509-amino-acid chain: Surface lipoprotein assembly modifier (509 aa).

The signal sequence occupies residues 1-32 (MNLMINLKPLTFLPFFGRLVFLSGVIYNTAWA). Residues 33-204 (NTVIPVDNSR…SYIDTINQRD (172 aa)) form an N-terminal domain region. The interval 43 to 72 (PDETFSQTSPKQHLFSQKPKPTEPTSSASS) is disordered. Over residues 46–57 (TFSQTSPKQHLF) the composition is skewed to polar residues. Residues 120 to 153 (FLLKWAQAVVARKQGKLNESVRLYRQIIAEKPNL) form a TPR repeat. Positions 205-509 (SWNVYGGVNY…RIYLTFSKTF (305 aa)) are C-terminal probable beta barrel. The next 14 membrane-spanning stretches (beta stranded) occupy residues 206–216 (WNVYGGVNYLH), 245–256 (LSYFINLSKNWS), 261–270 (FFTEFSADIN), 284–294 (STRLNLGGGYR), 298–308 (TEVKLMPFVEQ), 331–341 (SGINLDVDYWL), 345–355 (WKISTVLEYTE), 371–381 (YSISNTLIYMP), 386–395 (FWFVGLDYYQ), 408–417 (QGIRLGWGQE), 423–432 (STRLQTSYAT), 461–470 (GVNFTIWHRS), 476–485 (ITPKITWAYQ), and 499–509 (NRIYLTFSKTF).

This sequence belongs to the Slam family.

The protein localises to the cell outer membrane. Its function is as follows. Required for correct export to the cell surface of some cell outer membrane lipoproteins (tested with PM1514) upon heterologous expression in E.coli and probably also in Pasteurella. In Pasteurella multocida (strain Pm70), this protein is Surface lipoprotein assembly modifier.